The sequence spans 122 residues: Large ribosomal subunit protein uL14 (122 aa).

Belongs to the universal ribosomal protein uL14 family. As to quaternary structure, part of the 50S ribosomal subunit. Forms a cluster with proteins L3 and L19. In the 70S ribosome, L14 and L19 interact and together make contacts with the 16S rRNA in bridges B5 and B8.

Functionally, binds to 23S rRNA. Forms part of two intersubunit bridges in the 70S ribosome. This chain is Large ribosomal subunit protein uL14, found in Agathobacter rectalis (strain ATCC 33656 / DSM 3377 / JCM 17463 / KCTC 5835 / VPI 0990) (Eubacterium rectale).